The primary structure comprises 644 residues: Far upstream element-binding protein 1 (644 aa).

Disordered stretches follow at residues 1 to 31 (MADYSTVPPPSSGSAGGGGGGGGGGGVNDAF) and 44 to 94 (KIGG…PMHQ). Ala2 bears the N-acetylalanine mark. Residues 14 to 27 (SAGGGGGGGGGGGV) are compositionally biased toward gly residues. Residues Ser52 and Ser55 each carry the phosphoserine modification. Basic and acidic residues predominate over residues 65 to 77 (RPLEDGDQPDAKK). Positions 81-94 (QNDSFGTQLPPMHQ) are enriched in polar residues. KH domains lie at 100–164 (VMTE…KRLL), 185–251 (NAVQ…KEMV), and 275–339 (NEGI…AEII). Ser140 bears the Phosphoserine mark. At Thr153 the chain carries Phosphothreonine. Residues Arg321, Arg359, Arg361, and Arg363 each carry the omega-N-methylarginine modification. Residues 346-365 (VQAGNPGGPGPGGRGRGRGQ) form a disordered region. Gly residues predominate over residues 350-365 (NPGGPGPGGRGRGRGQ). Residues 376–443 (LQEFNFIVPT…QQIDYARQLI (68 aa)) form the KH 4 domain. Phosphothreonine is present on Thr432. Disordered stretches follow at residues 447 to 532 (IGGP…GTDP) and 548 to 580 (QAQPPPAAPAGAPTTTQTNGQGDQQNPAPAGQV). Residues 468-505 (PHGPPGPPGPGTPMGPYNPAPYNPGPPGPAPHGPPAPY) are compositionally biased toward pro residues. Over residues 556–573 (PAGAPTTTQTNGQGDQQN) the composition is skewed to low complexity. The residue at position 630 (Ser630) is a Phosphoserine.

In terms of assembly, found in a complex with PUF60 and far upstream element (FUSE) DNA segment. Interacts with PUF60 and JTV1. In terms of processing, ubiquitinated. This targets the protein for proteasome-mediated degradation.

Its subcellular location is the nucleus. Regulates MYC expression by binding to a single-stranded far-upstream element (FUSE) upstream of the MYC promoter. May act both as activator and repressor of transcription. The chain is Far upstream element-binding protein 1 (FUBP1) from Homo sapiens (Human).